The following is a 653-amino-acid chain: Fidgetin-like protein 2 (653 aa).

3 disordered regions span residues 1-36, 86-129, and 216-240; these read MHWT…ELPP, ASFL…SGAL, and YGAL…APTP. Residues 10-27 are compositionally biased toward polar residues; that stretch reads PLNQWPEQHLDVSSTTPS. Residues 97–107 are compositionally biased toward pro residues; the sequence is EPWPGPEPPYP. Positions 119–129 are enriched in gly residues; sequence KSGGGGGSGAL. The segment covering 219-240 has biased composition (pro residues); that stretch reads LPPPPGPPPAPYLTPGLPAPTP. ATP contacts are provided by residues A395 and 435-440; that span reads GAGKAL.

The protein belongs to the AAA ATPase family. Mg(2+) is required as a cofactor.

It localises to the cytoplasm. The protein resides in the cell cortex. It catalyses the reaction ATP + H2O = ADP + phosphate + H(+). In terms of biological role, microtubule-severing enzyme that negatively regulates cell migration and wound healing. In migrating cells, targets dynamic microtubules (MTs) at the leading edge and severs them, thereby suppressing motility. Microtubule severing releases ARHGEF2 which activates RHOA, which in turn regulates focal ahesion turnover via focal adhesion kinase, as opposed to F-actin polymerization, to suppress cell motility. Negative regulator of axon regeneration that suppresses axonal growth by selectively severing dynamic MTs in the distal axon shaft and growth cone. Contributes to proper cell branching during endothelial and neuronal development. In Homo sapiens (Human), this protein is Fidgetin-like protein 2.